Consider the following 530-residue polypeptide: Sulfate adenylyltransferase (530 aa).

Residues 1–178 (MPIPAPHGGK…IQGLDYPTHY (178 aa)) form an N-terminal region. The tract at residues 179–410 (DYIPFRKTPT…LRESNPPRSK (232 aa)) is catalytic. Gln-208 lines the sulfate pocket. ATP is bound by residues 208–211 (QTRN) and 304–307 (GRDH). Residues Thr-209, Arg-210, and Asn-211 contribute to the active site. Sulfate is bound at residue Arg-210. Position 308 (Ala-308) interacts with sulfate. Val-348 contributes to the ATP binding site. The tract at residues 411 to 530 (QGFAIVIDSS…LVSQGFYQQS (120 aa)) is required for oligomerization; adenylyl-sulfate kinase-like.

The protein belongs to the sulfate adenylyltransferase family. In terms of assembly, homohexamer. Dimer of trimers.

The protein localises to the cytoplasm. It carries out the reaction sulfate + ATP + H(+) = adenosine 5'-phosphosulfate + diphosphate. It participates in sulfur metabolism; hydrogen sulfide biosynthesis; sulfite from sulfate: step 1/3. Its function is as follows. Catalyzes the first intracellular reaction of sulfate assimilation, forming adenosine-5'-phosphosulfate (APS) from inorganic sulfate and ATP. Plays an important role in sulfate activation as a component of the biosynthesis pathway of sulfur-containing amino acids. This chain is Sulfate adenylyltransferase, found in Debaryomyces hansenii (strain ATCC 36239 / CBS 767 / BCRC 21394 / JCM 1990 / NBRC 0083 / IGC 2968) (Yeast).